The following is a 229-amino-acid chain: DNA mismatch repair protein MutH (229 aa).

This sequence belongs to the MutH family.

The protein resides in the cytoplasm. Its function is as follows. Sequence-specific endonuclease that cleaves unmethylated GATC sequences. It is involved in DNA mismatch repair. The chain is DNA mismatch repair protein MutH from Escherichia coli O127:H6 (strain E2348/69 / EPEC).